Here is a 481-residue protein sequence, read N- to C-terminus: Matrilin-3 (481 aa).

Residues 1-27 (MLLSAPLRHLPGLLLLLWPLLLLPSLA) form the signal peptide. One can recognise a VWFA domain in the interval 78–253 (DLVFIIDSSR…GVIEKLSARF (176 aa)). Position 193 is an omega-N-methylarginine (arginine 193). EGF-like domains follow at residues 259-300 (ALDQ…KTCS), 301-342 (AIDK…RTCA), 343-384 (ALDK…KTCS), and 385-426 (VRNK…KTCS). 12 disulfide bridges follow: cysteine 263/cysteine 274, cysteine 270/cysteine 284, cysteine 286/cysteine 299, cysteine 305/cysteine 316, cysteine 312/cysteine 326, cysteine 328/cysteine 341, cysteine 347/cysteine 358, cysteine 354/cysteine 368, cysteine 370/cysteine 383, cysteine 389/cysteine 400, cysteine 396/cysteine 410, and cysteine 412/cysteine 425. Asparagine 321 is a glycosylation site (N-linked (GlcNAc...) asparagine). Position 436 is a phosphoserine; by FAM20C (serine 436). The stretch at 451 to 475 (EKVSSHLQKLNTKLDNILKKLKVTE) forms a coiled coil.

In terms of assembly, can form homooligomers (monomers, dimers, trimers and tetramers) and heterooligomers with matrilin-1. Interacts with COMP. Component of a complex containing at least CRELD2, MANF, MATN3 and PDIA4. In terms of tissue distribution, strongly expressed in growing skeletal tissue such as epiphyseal growth plate or in bone undergoing growth and remodeling. In the bone, actively synthesized in osteoblasts and osteocytes. Expressed in cartilage of sternum, femur, vertebrae, trachea, articular and epiphyseal cartilage, cartilage of developing bones and bones.

Its subcellular location is the secreted. Functionally, major component of the extracellular matrix of cartilage and may play a role in the formation of extracellular filamentous networks. The sequence is that of Matrilin-3 (Matn3) from Mus musculus (Mouse).